Reading from the N-terminus, the 320-residue chain is MLTGQFLTPLMSGFVITVIFMPLFIGYLRFKKEGQTIRDEGPKWHAKKNGTPTMGGLVFIVAAVISSIWVAIWLQQLTNSLWIALFILVLYGLLGFSDDFIKVFKKQNLGLRAWQKLAGQILGGAVFLAVYFHEGFSHALNIPLIGTISSSWFFSLFVIVWLVGFSNAVNLADGIDGLVAGLAIVSFATYTIIAFRQNRIDVAIFGLTIIGGLIGFLIFNHKPAQIFMGDVGSLALGGALAAMSILLHREFSLLLIGLVYVIETASVMLQVASFKLFHKRIFKMSPIHHHFEMSGWSEWRIDISFWVFSIICSAIYLLIF.

The next 10 membrane-spanning stretches (helical) occupy residues 6 to 26 (FLTP…LFIG), 54 to 74 (MGGL…AIWL), 81 to 101 (LWIA…DDFI), 117 to 137 (LAGQ…EGFS), 145 to 165 (IGTI…LVGF), 175 to 195 (IDGL…IIAF), 200 to 220 (IDVA…LIFN), 226 to 246 (IFMG…MSIL), 251 to 271 (FSLL…MLQV), and 300 to 320 (RIDI…LLIF).

Belongs to the glycosyltransferase 4 family. MraY subfamily. Requires Mg(2+) as cofactor.

The protein localises to the cell membrane. It catalyses the reaction UDP-N-acetyl-alpha-D-muramoyl-L-alanyl-gamma-D-glutamyl-L-lysyl-D-alanyl-D-alanine + di-trans,octa-cis-undecaprenyl phosphate = Mur2Ac(oyl-L-Ala-gamma-D-Glu-L-Lys-D-Ala-D-Ala)-di-trans,octa-cis-undecaprenyl diphosphate + UMP. It participates in cell wall biogenesis; peptidoglycan biosynthesis. Catalyzes the initial step of the lipid cycle reactions in the biosynthesis of the cell wall peptidoglycan: transfers peptidoglycan precursor phospho-MurNAc-pentapeptide from UDP-MurNAc-pentapeptide onto the lipid carrier undecaprenyl phosphate, yielding undecaprenyl-pyrophosphoryl-MurNAc-pentapeptide, known as lipid I. The polypeptide is Phospho-N-acetylmuramoyl-pentapeptide-transferase (Latilactobacillus sakei subsp. sakei (strain 23K) (Lactobacillus sakei subsp. sakei)).